We begin with the raw amino-acid sequence, 359 residues long: Nicotinate-nucleotide--dimethylbenzimidazole phosphoribosyltransferase (359 aa).

Catalysis depends on E318, which acts as the Proton acceptor.

It belongs to the CobT family. In terms of assembly, homodimer.

It catalyses the reaction 5,6-dimethylbenzimidazole + nicotinate beta-D-ribonucleotide = alpha-ribazole 5'-phosphate + nicotinate + H(+). Its pathway is nucleoside biosynthesis; alpha-ribazole biosynthesis; alpha-ribazole from 5,6-dimethylbenzimidazole: step 1/2. Catalyzes the synthesis of alpha-ribazole-5'-phosphate from nicotinate mononucleotide (NAMN) and 5,6-dimethylbenzimidazole (DMB). This chain is Nicotinate-nucleotide--dimethylbenzimidazole phosphoribosyltransferase, found in Escherichia coli (strain SMS-3-5 / SECEC).